Reading from the N-terminus, the 132-residue chain is Small ribosomal subunit protein uS8 (132 aa).

Belongs to the universal ribosomal protein uS8 family. In terms of assembly, part of the 30S ribosomal subunit. Contacts proteins S5 and S12.

In terms of biological role, one of the primary rRNA binding proteins, it binds directly to 16S rRNA central domain where it helps coordinate assembly of the platform of the 30S subunit. This chain is Small ribosomal subunit protein uS8, found in Lactobacillus acidophilus (strain ATCC 700396 / NCK56 / N2 / NCFM).